The following is a 301-amino-acid chain: MIRSRVNLAREVPKKAKAHLSKERRLIKEDSEFVFGTHSVKNALATRKRECRALYVQNADIHSEFEEFLNKLQYKIPIKSVNKEHLNQITACRPHNGVVLEASSLNVPTISDLLFPAGEEYNNKNGQDSPHNDLNEGKSSSSDNYPPLYVYVDGITDPQNMGAVIRSAYILGAKGILLSKKHNTFLSPVVSKASAGALEVFNISHVKNPMVFLRNSVLKGWKVIGTKPALPDNKDQIYTPHKIKTELMNEPKILVLGSEKGLRTNILTQCSHYVSIPGGDKYVDSLNVSVAAGILLYSLVN.

The transit peptide at 1–11 directs the protein to the mitochondrion; the sequence is MIRSRVNLARE. Residues 121-141 form a disordered region; sequence YNNKNGQDSPHNDLNEGKSSS.

Belongs to the class IV-like SAM-binding methyltransferase superfamily. RNA methyltransferase TrmH family.

Its subcellular location is the mitochondrion. The catalysed reaction is a guanosine in 21S rRNA + S-adenosyl-L-methionine = a 2'-O-methylguanosine in 21S rRNA + S-adenosyl-L-homocysteine + H(+). S-adenosyl-L-methionine-dependent 2'-O-ribose methyltransferase that catalyzes the formation of the 2'-O-methylguanosine corresponding to position 2270 in S.cerevisiae 21S mitochondrial large subunit ribosomal RNA (mtLSU rRNA), a universally conserved modification in the peptidyl transferase domain of the mtLSU rRNA. The polypeptide is rRNA methyltransferase 1, mitochondrial (Schizosaccharomyces pombe (strain 972 / ATCC 24843) (Fission yeast)).